Reading from the N-terminus, the 238-residue chain is Complement C1q-like protein 4 (238 aa).

The N-terminal stretch at 1–15 (MVLLLLVAIPLLVHS) is a signal peptide. Residues 37–102 (SRGQGPDGAP…PGPGPGGAAP (66 aa)) form a disordered region. The Collagen-like domain maps to 53-96 (PPGAKGEVGRRGKAGLRGPPGPPGPRGPPGEPGRPGPPGPPGPG). Residues 71-96 (PPGPPGPRGPPGEPGRPGPPGPPGPG) are compositionally biased toward pro residues. One can recognise a C1q domain in the interval 105–238 (GYVPRIAFYA…TFSGFIIYPD (134 aa)).

In terms of assembly, forms homooligomers, predominantly dimers or trimers. Forms heterooligomers with C1QL1, C1QL2 and C1QL3, when proteins are coexpressed; this interaction does not occur after secretion. Interacts with ADGRB3. In terms of tissue distribution, highly expressed in testis and adipose tissue, brown adipose tissue expressing higher levels than subcutaneous and visceral white adipose tissue. In gonadal fat pad, expressed at lower levels in adipocytes than in the stromal vascular fraction (VSP), which contains preadipocytes, fibroblasts, endothelial cells and occasional immune cells. Expression exhibits sexually dimorphism, with higher levels in females than in males.

The protein resides in the secreted. Its function is as follows. May regulate the number of excitatory synapses that are formed on hippocampus neurons. Has no effect on inhibitory synapses. May inhibit adipocyte differentiation at an early stage of the process. The protein is Complement C1q-like protein 4 (C1ql4) of Mus musculus (Mouse).